A 451-amino-acid chain; its full sequence is Glycosyltransferase-like At2g41451 (451 aa).

The first 23 residues, 1–23 (MASSDSSYSRKFLLITFLPLSLA), serve as a signal peptide directing secretion. N36, N137, N168, N441, and N444 each carry an N-linked (GlcNAc...) asparagine glycan. A GT92 domain is found at 109-345 (QTLPWIFYHK…TYSKFSDLTS (237 aa)).

Belongs to the glycosyltransferase 92 family.

It is found in the secreted. The protein resides in the cell wall. Its subcellular location is the cytoplasm. It localises to the cell membrane. Its function is as follows. Involved in the coordination between cell elongation and cellulose synthesis by promoting the expression of genes involved in cell elongation and cellulose synthesis. Acts as a regulator of plasmodesmatal permeability. Maybe a glycosyltransferase. The polypeptide is Glycosyltransferase-like At2g41451 (Arabidopsis thaliana (Mouse-ear cress)).